We begin with the raw amino-acid sequence, 700 residues long: Elongation factor G (700 aa).

The 277-residue stretch at 10–286 folds into the tr-type G domain; the sequence is TKVRNIGIMA…AVIDYLPNPL (277 aa). GTP-binding positions include 19 to 26, 83 to 87, and 137 to 140; these read AHIDAGKT, DTPGH, and NKMD.

This sequence belongs to the TRAFAC class translation factor GTPase superfamily. Classic translation factor GTPase family. EF-G/EF-2 subfamily.

It is found in the cytoplasm. Catalyzes the GTP-dependent ribosomal translocation step during translation elongation. During this step, the ribosome changes from the pre-translocational (PRE) to the post-translocational (POST) state as the newly formed A-site-bound peptidyl-tRNA and P-site-bound deacylated tRNA move to the P and E sites, respectively. Catalyzes the coordinated movement of the two tRNA molecules, the mRNA and conformational changes in the ribosome. This is Elongation factor G from Mycolicibacterium vanbaalenii (strain DSM 7251 / JCM 13017 / BCRC 16820 / KCTC 9966 / NRRL B-24157 / PYR-1) (Mycobacterium vanbaalenii).